The following is a 242-amino-acid chain: ATP synthase subunit a (242 aa).

6 helical membrane passes run 29-49 (SAVAMIFVSIAASLLLIIAFV), 83-103 (VFFPLILTLFLFISLGNIIGM), 114-134 (IIVTFSLAMIVFTTTLVYGIY), 140-160 (FFSLFLPKNIPLWLAPIMVII), 181-201 (VAGHILLKIIAWSIVSLTWFF), and 206-226 (IALVIVLIGFELFISILQAYI).

This sequence belongs to the ATPase A chain family. In terms of assembly, F-type ATPases have 2 components, CF(1) - the catalytic core - and CF(0) - the membrane proton channel. CF(1) has five subunits: alpha(3), beta(3), gamma(1), delta(1), epsilon(1). CF(0) has three main subunits: a(1), b(2) and c(9-12). The alpha and beta chains form an alternating ring which encloses part of the gamma chain. CF(1) is attached to CF(0) by a central stalk formed by the gamma and epsilon chains, while a peripheral stalk is formed by the delta and b chains.

It is found in the cell inner membrane. Key component of the proton channel; it plays a direct role in the translocation of protons across the membrane. This is ATP synthase subunit a from Orientia tsutsugamushi (strain Boryong) (Rickettsia tsutsugamushi).